Reading from the N-terminus, the 395-residue chain is Chalcone synthase (395 aa).

Cysteine 169 is a catalytic residue.

The protein belongs to the thiolase-like superfamily. Chalcone/stilbene synthases family.

The enzyme catalyses (E)-4-coumaroyl-CoA + 3 malonyl-CoA + 3 H(+) = 2',4,4',6'-tetrahydroxychalcone + 3 CO2 + 4 CoA. It participates in secondary metabolite biosynthesis; flavonoid biosynthesis. Functionally, the primary product of this enzyme is 4,2',4',6'-tetrahydroxychalcone (also termed naringenin-chalcone or chalcone) which can under specific conditions spontaneously isomerize into naringenin. The protein is Chalcone synthase (CHS) of Pinus strobus (Eastern white pine).